Here is a 75-residue protein sequence, read N- to C-terminus: uncharacterized protein (75 aa).

2 helical membrane-spanning segments follow: residues 5-25 (VIIC…IFEI) and 42-62 (VAIF…GSVL).

It localises to the membrane. This is an uncharacterized protein from Saccharomyces cerevisiae (strain ATCC 204508 / S288c) (Baker's yeast).